The chain runs to 599 residues: Elongation factor 4 (599 aa).

One can recognise a tr-type G domain in the interval 5–187; sequence STIRNFAIIA…AIVHRLPAPV (183 aa). GTP-binding positions include 17–22 and 134–137; these read DHGKST and NKAD.

This sequence belongs to the TRAFAC class translation factor GTPase superfamily. Classic translation factor GTPase family. LepA subfamily.

The protein resides in the cell inner membrane. The catalysed reaction is GTP + H2O = GDP + phosphate + H(+). Functionally, required for accurate and efficient protein synthesis under certain stress conditions. May act as a fidelity factor of the translation reaction, by catalyzing a one-codon backward translocation of tRNAs on improperly translocated ribosomes. Back-translocation proceeds from a post-translocation (POST) complex to a pre-translocation (PRE) complex, thus giving elongation factor G a second chance to translocate the tRNAs correctly. Binds to ribosomes in a GTP-dependent manner. The chain is Elongation factor 4 from Anaplasma marginale (strain Florida).